A 321-amino-acid chain; its full sequence is Probable heme-iron transport system permease protein IsdF (321 aa).

9 helical membrane-spanning segments follow: residues 9 to 29 (LLFLCLLVILIATAYISFVTG), 61 to 81 (ILIALMVGAMLAVSGALLQAA), 89 to 109 (ANIIGVSSGALIMRALCMLFI), 114 to 134 (FYLPLLSFIGGLIPFLIIILL), 143 to 163 (VSMILVGVALFVLLNGVLEIL), 179 to 199 (IWSDVYILAVSALLGLILTLL), 233 to 253 (VFLASATVAIVGQLAFLGIIV), 267 to 287 (LIPFSTVIGAWLLLVADLLGR), and 294 to 314 (EIPANAILMIVGGPMLIYLIC).

Belongs to the binding-protein-dependent transport system permease family. FecCD subfamily.

The protein localises to the cell membrane. Part of the binding-protein-dependent transport system for heme-iron. Responsible for the translocation of the substrate across the membrane. The protein is Probable heme-iron transport system permease protein IsdF (isdF) of Staphylococcus aureus (strain NCTC 8325 / PS 47).